The sequence spans 424 residues: Histidine--tRNA ligase (424 aa).

The protein belongs to the class-II aminoacyl-tRNA synthetase family. As to quaternary structure, homodimer.

The protein localises to the cytoplasm. The catalysed reaction is tRNA(His) + L-histidine + ATP = L-histidyl-tRNA(His) + AMP + diphosphate + H(+). The polypeptide is Histidine--tRNA ligase (Bacillus velezensis (strain DSM 23117 / BGSC 10A6 / LMG 26770 / FZB42) (Bacillus amyloliquefaciens subsp. plantarum)).